A 331-amino-acid polypeptide reads, in one-letter code: Phosphate acyltransferase (331 aa).

The protein belongs to the PlsX family. As to quaternary structure, homodimer. Probably interacts with PlsY.

The protein localises to the cytoplasm. The catalysed reaction is a fatty acyl-[ACP] + phosphate = an acyl phosphate + holo-[ACP]. Its pathway is lipid metabolism; phospholipid metabolism. In terms of biological role, catalyzes the reversible formation of acyl-phosphate (acyl-PO(4)) from acyl-[acyl-carrier-protein] (acyl-ACP). This enzyme utilizes acyl-ACP as fatty acyl donor, but not acyl-CoA. The sequence is that of Phosphate acyltransferase from Lactococcus lactis subsp. lactis (strain IL1403) (Streptococcus lactis).